The sequence spans 286 residues: MRYIRLCIISLLATLPLAVHASPQPLEQIKLSESQLSGRVGMIEMDLASGRTLTAWRADERFPMMSTFKVVLCGAVLARVDAGDEQLERKIHYRQQDLVDYSPVSEKHLADGMTVGELCAAAITMSDNSAANLLLATVGGPAGLTAFLRQIGDNVTRLDRWETELNEALPGDARGTTTPASMAATLRKLLTSQRLSARSQRQLLQWMVDDRVAGPLIRSVLPAGWFIADKTGAGERGARGIVALLGPNNKAERIVVIYLRDTPASMAERNQQIAGIGAALIEHWQR.

The N-terminal stretch at 1–21 (MRYIRLCIISLLATLPLAVHA) is a signal peptide. S66 (acyl-ester intermediate) is an active-site residue. C73 and C119 are disulfide-bonded. Residue E164 is the Proton acceptor of the active site. 230–232 (KTG) serves as a coordination point for substrate.

It belongs to the class-A beta-lactamase family.

The enzyme catalyses a beta-lactam + H2O = a substituted beta-amino acid. Its function is as follows. Hydrolyzes ampicillin. Can also hydrolyze cephaloridine, aztreonam and ceftazidime with a low catalytic rate. This Escherichia coli protein is Beta-lactamase SHV-24 (bla).